We begin with the raw amino-acid sequence, 676 residues long: Electrogenic aspartate/glutamate antiporter SLC25A12, mitochondrial (676 aa).

A2 is modified (N-acetylalanine). Positions 2-293 (AVKVHTTKRG…TLADIERIAP (292 aa)) are regulatory N-terminal domain. Residues 2–328 (AVKVHTTKRG…WLQIAESAYR (327 aa)) lie on the Mitochondrial intermembrane side of the membrane. 5 residues coordinate Ca(2+): D65, T67, D69, L71, and E76. EF-hand domains lie at 65–76 (DQTKDGLISYQE), 86–121 (APDS…TIIH), 125–155 (PFNW…QFLQ), and 157–192 (LQLE…IRSH). The tract at residues 294 to 309 (LAEGALPYNLAELQRQ) is linker loop domain. Positions 319 to 611 (WLQIAESAYR…RWFYIDFGGL (293 aa)) are carrier domain. Solcar repeat units follow at residues 323 to 415 (AESA…VRDK), 423 to 507 (IPLP…CKLL), and 515 to 603 (VGGI…LQRW). The chain crosses the membrane as a helical span at residues 329–346 (FTLGSVAGAVGATAVYPI). Topologically, residues 347–389 (DLVKTRMQNQRGTGSVVGELMYKNSFDCFKKVLRYEGFFGLYR) are mitochondrial matrix. The chain crosses the membrane as a helical span at residues 390-409 (GLIPQLIGVAPEKAIKLTVN). Residues 410–432 (DFVRDKFTRRDGSIPLPAEILAG) lie on the Mitochondrial intermembrane side of the membrane. The helical transmembrane segment at 433-446 (GCAGGSQVIFTNPL) threads the bilayer. The Mitochondrial matrix segment spans residues 447–481 (EIVKIRLQVAGEITTGPRVSALNVLQDLGLFGLYK). A helical membrane pass occupies residues 482-501 (GAKACFLRDIPFSAIYFPVY). The Mitochondrial intermembrane segment spans residues 502 to 520 (AHCKLLLADENGHVGGINL). Residues 521 to 538 (LTAGAMAGVPAASLVTPA) traverse the membrane as a helical segment. The Mitochondrial matrix segment spans residues 539-577 (DVIKTRLQVAARAGQTTYSGVIDCFRKILREEGPSAFWK). A helical transmembrane segment spans residues 578–597 (GTAARVFRSSPQFGVTLVTY). Over 598–676 (ELLQRWFYID…AQPKVAAAAQ (79 aa)) the chain is Mitochondrial intermembrane. The interval 612–674 (KPSGSEPTPK…AAAQPKVAAA (63 aa)) is C-terminal domain.

The protein belongs to the mitochondrial carrier (TC 2.A.29) family. Homodimer (via N-terminus).

Its subcellular location is the mitochondrion inner membrane. It carries out the reaction L-aspartate(in) + L-glutamate(out) + H(+)(out) = L-aspartate(out) + L-glutamate(in) + H(+)(in). The enzyme catalyses 3-sulfino-L-alanine(out) + L-glutamate(in) + H(+)(in) = 3-sulfino-L-alanine(in) + L-glutamate(out) + H(+)(out). The catalysed reaction is 3-sulfino-L-alanine(out) + L-aspartate(in) = 3-sulfino-L-alanine(in) + L-aspartate(out). Its activity is regulated as follows. L-aspartate and 3-sulfino-L-alanine uptake are both inhibited by glisoxepide. Its function is as follows. Mitochondrial electrogenic aspartate/glutamate antiporter that favors efflux of aspartate and entry of glutamate and proton within the mitochondria as part of the malate-aspartate shuttle. Also mediates the uptake of L-cysteinesulfinate (3-sulfino-L-alanine) by mitochondria in exchange of L-glutamate and proton. Can also exchange L-cysteinesulfinate with aspartate in their anionic form without any proton translocation. Lacks transport activity towards L-glutamine or gamma-aminobutyric acid (GABA). The sequence is that of Electrogenic aspartate/glutamate antiporter SLC25A12, mitochondrial from Rattus norvegicus (Rat).